The primary structure comprises 953 residues: Isoleucine--tRNA ligase (953 aa).

A 'HIGH' region motif is present at residues 58–68 (PYANGFIHLGH). E573 serves as a coordination point for L-isoleucyl-5'-AMP. Positions 614 to 618 (KMSKS) match the 'KMSKS' region motif. Residue K617 coordinates ATP. Positions 916, 919, 936, and 939 each coordinate Zn(2+).

The protein belongs to the class-I aminoacyl-tRNA synthetase family. IleS type 1 subfamily. Monomer. Requires Zn(2+) as cofactor.

Its subcellular location is the cytoplasm. The catalysed reaction is tRNA(Ile) + L-isoleucine + ATP = L-isoleucyl-tRNA(Ile) + AMP + diphosphate. Its function is as follows. Catalyzes the attachment of isoleucine to tRNA(Ile). As IleRS can inadvertently accommodate and process structurally similar amino acids such as valine, to avoid such errors it has two additional distinct tRNA(Ile)-dependent editing activities. One activity is designated as 'pretransfer' editing and involves the hydrolysis of activated Val-AMP. The other activity is designated 'posttransfer' editing and involves deacylation of mischarged Val-tRNA(Ile). The chain is Isoleucine--tRNA ligase from Blochmanniella floridana.